We begin with the raw amino-acid sequence, 167 residues long: Transmembrane protein 229B (167 aa).

The Cytoplasmic portion of the chain corresponds to 1–14 (MASAEPLTALSRWY). A helical transmembrane segment spans residues 15-35 (LYAIHGYFCEVMFTAAWEFVV). Residues 36–40 (NFNWK) lie on the Extracellular side of the membrane. The chain crosses the membrane as a helical span at residues 41–61 (FPGVTSVWALFIYGTSILIVE). Topologically, residues 62–73 (RMYLRLRGRCPL) are cytoplasmic. The chain crosses the membrane as a helical span at residues 74-94 (LLRCLIYTLWTYLWEFTTGFI). Over 95–111 (LRQFNACPWDYSQFDFD) the chain is Extracellular. Residues 112-132 (FMGLITLEYAVPWFCGALLVE) traverse the membrane as a helical segment. Residues 133–167 (QFVIRNTLRLRFDKDAEPGEPSGALALANGHVKTD) are Cytoplasmic-facing.

It belongs to the TMEM229 family.

The protein localises to the membrane. This chain is Transmembrane protein 229B (TMEM229B), found in Bos taurus (Bovine).